The primary structure comprises 66 residues: UPF0337 protein BT9727_0908 (66 aa).

Residues 1–22 form a disordered region; that stretch reads MSENGLKEQITGKVEKTKGQVK. Residues 13-22 show a composition bias toward basic and acidic residues; that stretch reads KVEKTKGQVK.

This sequence belongs to the UPF0337 (CsbD) family.

This is UPF0337 protein BT9727_0908 from Bacillus thuringiensis subsp. konkukian (strain 97-27).